The primary structure comprises 204 residues: ATP-dependent Clp protease proteolytic subunit (204 aa).

The Nucleophile role is filled by Ser102. The active site involves His127.

Belongs to the peptidase S14 family. Fourteen ClpP subunits assemble into 2 heptameric rings which stack back to back to give a disk-like structure with a central cavity, resembling the structure of eukaryotic proteasomes.

It is found in the cytoplasm. The catalysed reaction is Hydrolysis of proteins to small peptides in the presence of ATP and magnesium. alpha-casein is the usual test substrate. In the absence of ATP, only oligopeptides shorter than five residues are hydrolyzed (such as succinyl-Leu-Tyr-|-NHMec, and Leu-Tyr-Leu-|-Tyr-Trp, in which cleavage of the -Tyr-|-Leu- and -Tyr-|-Trp bonds also occurs).. Cleaves peptides in various proteins in a process that requires ATP hydrolysis. Has a chymotrypsin-like activity. Plays a major role in the degradation of misfolded proteins. In Neisseria gonorrhoeae (strain ATCC 700825 / FA 1090), this protein is ATP-dependent Clp protease proteolytic subunit.